Consider the following 556-residue polypeptide: ATP synthase subunit beta-2, mitochondrial (556 aa).

Residues 1–20 (MASRRVLSSLLRSSSGRSAA) show a composition bias toward low complexity. The tract at residues 1–37 (MASRRVLSSLLRSSSGRSAAKLVNRNPRLPSPSPARH) is disordered. A mitochondrion-targeting transit peptide spans 1–51 (MASRRVLSSLLRSSSGRSAAKLVNRNPRLPSPSPARHAAPCSYLLGRVAEY). A Phosphoserine modification is found at S59. 231–238 (GGAGVGKT) contacts ATP.

Belongs to the ATPase alpha/beta chains family. F-type ATPases have 2 components, CF(1) - the catalytic core - and CF(0) - the membrane proton channel. CF(1) has five subunits: alpha(3), beta(3), gamma(1), delta(1), epsilon(1). CF(0) has three main subunits: a, b and c.

The protein resides in the mitochondrion. It is found in the mitochondrion inner membrane. The enzyme catalyses ATP + H2O + 4 H(+)(in) = ADP + phosphate + 5 H(+)(out). Mitochondrial membrane ATP synthase (F(1)F(0) ATP synthase or Complex V) produces ATP from ADP in the presence of a proton gradient across the membrane which is generated by electron transport complexes of the respiratory chain. F-type ATPases consist of two structural domains, F(1) - containing the extramembraneous catalytic core, and F(0) - containing the membrane proton channel, linked together by a central stalk and a peripheral stalk. During catalysis, ATP synthesis in the catalytic domain of F(1) is coupled via a rotary mechanism of the central stalk subunits to proton translocation. Subunits alpha and beta form the catalytic core in F(1). Rotation of the central stalk against the surrounding alpha(3)beta(3) subunits leads to hydrolysis of ATP in three separate catalytic sites on the beta subunits. In Arabidopsis thaliana (Mouse-ear cress), this protein is ATP synthase subunit beta-2, mitochondrial.